A 1355-amino-acid chain; its full sequence is Probable aldehyde oxidase 2 (1355 aa).

The region spanning 9-96 is the 2Fe-2S ferredoxin-type domain; the sequence is RPVVVTVNGE…HCAVTTSEGI (88 aa). 4 residues coordinate [2Fe-2S] cluster: Cys48, Cys53, Cys56, and Cys78. In terms of domain architecture, FAD-binding PCMH-type spans 244-422; it reads VAVTGDGWFH…VSISIPDWGS (179 aa). The segment at 544–577 is disordered; that stretch reads PENANVPNGSCTNGTANGSANSSPEKHSNVDSSD. A compositionally biased stretch (polar residues) spans 548–566; that stretch reads NVPNGSCTNGTANGSANSS.

It belongs to the xanthine dehydrogenase family. Aldehyde oxidases (AO) are homodimers and heterodimers of AO subunits. [2Fe-2S] cluster serves as cofactor. It depends on FAD as a cofactor. Mo-molybdopterin is required as a cofactor.

It catalyses the reaction an aldehyde + O2 + H2O = a carboxylate + H2O2 + H(+). This Oryza sativa subsp. japonica (Rice) protein is Probable aldehyde oxidase 2.